The following is a 197-amino-acid chain: Probable nicotinate-nucleotide adenylyltransferase (197 aa).

The protein belongs to the NadD family.

It catalyses the reaction nicotinate beta-D-ribonucleotide + ATP + H(+) = deamido-NAD(+) + diphosphate. Its pathway is cofactor biosynthesis; NAD(+) biosynthesis; deamido-NAD(+) from nicotinate D-ribonucleotide: step 1/1. In terms of biological role, catalyzes the reversible adenylation of nicotinate mononucleotide (NaMN) to nicotinic acid adenine dinucleotide (NaAD). The sequence is that of Probable nicotinate-nucleotide adenylyltransferase from Bordetella avium (strain 197N).